A 200-amino-acid polypeptide reads, in one-letter code: Ras-related protein RABF2b (200 aa).

17 to 25 (GDVGAGKSS) is a binding site for GTP. The Effector region motif lies at 39 to 47 (QESTIGAAF). GTP is bound by residues 65–69 (DTAGQ), 123–126 (NKSD), and 153–154 (SA). S-geranylgeranyl cysteine attachment occurs at residues cysteine 198 and cysteine 199.

The protein belongs to the small GTPase superfamily. Rab family. Interacts with VPS9A homodimer. Interacts with TCTP1. Interacts with MON1. Interacts with EREX (via PX domain). Binds to VPS3. Expressed in roots and actively dividing cells.

Its subcellular location is the early endosome membrane. It localises to the endosome membrane. The protein resides in the prevacuolar compartment membrane. It is found in the endosome. The protein localises to the multivesicular body membrane. Its subcellular location is the cell membrane. It localises to the cytoplasm. With respect to regulation, regulated by guanine nucleotide exchange factors (GEFs) which promote the exchange of bound GDP for free GTP. Its function is as follows. Endosomal protein that may be involved in endocytosis. Involved in the trafficking of proteins from prevacuolar compartments (PVCs) to vacuoles. May activate the MON1-CCZ1 complex which acts as guanine nucleotide exchange factors (GEF) for Rab7 protein family, and serves as a link between Rab5 and Rab7 families in PVCs, and mediates PVC maturation. Involved in vacuolar transport of storage proteins with EREX as effector. Regulates membrane trafficking to protein storage vacuoles (PSVs). The protein is Ras-related protein RABF2b of Arabidopsis thaliana (Mouse-ear cress).